The chain runs to 196 residues: Signaling threshold-regulating transmembrane adapter 1 (196 aa).

The signal sequence occupies residues 1–24; the sequence is MNQADPRLRAVCLWTLTSAAMSRG. The Extracellular segment spans residues 25 to 40; that stretch reads DNCTDLLALGIPSITQ. N-linked (GlcNAc...) asparagine glycosylation is present at asparagine 26. A helical transmembrane segment spans residues 41-61; sequence AWGLWVLLGAVTLLFLISLAA. Over 62-196 the chain is Cytoplasmic; it reads HLSQWTRGRS…AYANSQPAAS (135 aa). A phosphoserine mark is found at serine 80 and serine 83. Position 90 is a phosphotyrosine (tyrosine 90). Positions 90–93 are interaction with GRB2; it reads YGNL. Position 102 is a phosphoserine (serine 102). At tyrosine 127 the chain carries Phosphotyrosine. Residues 132–167 are disordered; the sequence is LRPPQGRIPGPGTPVKYSEVVLDSEPKSQASGPEPE. The residue at position 144 (threonine 144) is a Phosphothreonine. An interaction with PTPN11 region spans residues 146–151; it reads VKYSEV. Phosphotyrosine occurs at positions 148 and 169. Residues 169–172 form an interaction with CSK region; sequence YASV. Serine 182 is subject to Phosphoserine. At tyrosine 188 the chain carries Phosphotyrosine. The interval 188–191 is interaction with GRB2; it reads YANS.

In terms of assembly, homodimer; disulfide-linked. When phosphorylated, interacts with PTPN11/SHP2, GRB2 and CSK. Post-translationally, phosphorylated on tyrosines by LCK, FYN or ZAP70 upon TCR activation; which leads to the recruitment of PTPN11, GRB2 and CSK. As to expression, specifically expressed in T- and B-cells. Present in plasma cells but not in germinal center B-cells (at protein level). Expressed in T- and B-cell lymphoma.

The protein localises to the cell membrane. Negatively regulates TCR (T-cell antigen receptor)-mediated signaling in T-cells. Involved in positive selection of T-cells. The polypeptide is Signaling threshold-regulating transmembrane adapter 1 (SIT1) (Homo sapiens (Human)).